We begin with the raw amino-acid sequence, 274 residues long: Probable WRKY transcription factor 49 (274 aa).

Residues 108 to 173 (NSNGMCDDGY…YEGFHFHYTY (66 aa)) constitute a DNA-binding region (WRKY). Residues 188 to 228 (KTKIHKHNAQDMNKKSQTQEESKEAQLGELTNQNHPVNKAQ) form a disordered region. A coiled-coil region spans residues 193–222 (KHNAQDMNKKSQTQEESKEAQLGELTNQNH). The segment covering 195–213 (NAQDMNKKSQTQEESKEAQ) has biased composition (basic and acidic residues). Over residues 216-228 (ELTNQNHPVNKAQ) the composition is skewed to polar residues.

It belongs to the WRKY group II-c family.

The protein resides in the nucleus. In terms of biological role, transcription factor. Interacts specifically with the W box (5'-(T)TGAC[CT]-3'), a frequently occurring elicitor-responsive cis-acting element. This Arabidopsis thaliana (Mouse-ear cress) protein is Probable WRKY transcription factor 49 (WRKY49).